The chain runs to 255 residues: Putative OPA3-like protein CG13603 (255 aa).

Residues 108-154 adopt a coiled-coil conformation; it reads KENKKNELAQSEKMELTNMLTEMNFRLERQDAQIREMTRVLADLDSR. Residues 168–187 form a disordered region; sequence VPFDPDTPDQSASARNPKKF. The stretch at 212-241 forms a coiled coil; it reads DGRNRKAKEALQHLDEVAVQLEQSLGEAAT.

The protein belongs to the OPA3 family.

The sequence is that of Putative OPA3-like protein CG13603 from Drosophila melanogaster (Fruit fly).